We begin with the raw amino-acid sequence, 181 residues long: Oligoribonuclease (181 aa).

Positions 8–171 (LIWVDLEMTG…DDIHDSIAEL (164 aa)) constitute an Exonuclease domain. The active site involves Y129.

It belongs to the oligoribonuclease family.

The protein localises to the cytoplasm. Functionally, 3'-to-5' exoribonuclease specific for small oligoribonucleotides. The protein is Oligoribonuclease of Photobacterium profundum (strain SS9).